Here is a 401-residue protein sequence, read N- to C-terminus: Histone acetyltransferase type B subunit 2 (401 aa).

WD repeat units follow at residues 116–147 (EHEE…FLYS), 158–189 (FHKD…ALWE), 206–237 (LHSD…KIND), 249–280 (KCPQ…YLYD), and 293–324 (GHED…MMWD). Residues 335–339 (DDAED) form an interaction with the histone H4 N-terminus region. A WD 6 repeat occupies 350–381 (GHRSSVNDFDLNPQIPWLVASAEEENILQVWK).

This sequence belongs to the WD repeat RBAP46/RBAP48/MSI1 family. Component of the HAT-B complex composed of at least HAT1 and HAT2. In the cytoplasm, this complex binds to the histone H4 tail. In the nucleus, the HAT-B complex has an additional component, the histone H3/H4 chaperone HIF1.

The protein resides in the cytoplasm. It is found in the nucleus. Regulatory subunit of the histone acetylase B (HAT-B) complex. The complex acetylates 'Lys-12' of histone H4 which is required for telomeric silencing. HAT2 is required for high affinity binding of the acetyltransferase to histone H4, for the nuclear location of HAT1 and for the HAT1-HIF1 interaction. Alone, it is unable to bind to H4, requiring HAT1 for high affinity interaction with the histone tail. HAT2 also has a HAT1 independent function in life-span regulation. The chain is Histone acetyltransferase type B subunit 2 (HAT2) from Saccharomyces cerevisiae (strain ATCC 204508 / S288c) (Baker's yeast).